The following is a 420-amino-acid chain: Vacuolar amino acid transporter 5 (420 aa).

The Cytoplasmic segment spans residues 1 to 19 (MSGYSPLSSGPADVHIGKA). Residues 20-40 (GFFSSVINLANTILGAGILSL) form a helical membrane-spanning segment. Residues 41-49 (PNAFTKTGL) lie on the Vacuolar side of the membrane. A helical membrane pass occupies residues 50 to 70 (LFGCLTIVFSAFASFLGLYFV). Residues 71–96 (SQCAARLPRGKASFAAVAKHTFPSLA) are Cytoplasmic-facing. A helical membrane pass occupies residues 97–117 (VVFDASIAVKCFGVAVSYLVI). The Vacuolar portion of the chain corresponds to 118 to 141 (VGDLMPQIAPSLGLSSPMFLRRQT). The helical transmembrane segment at 142–162 (WIVFALFVLTPLSFLKRLDSL) threads the bilayer. At 163 to 166 (RHTS) the chain is on the cytoplasmic side. A helical membrane pass occupies residues 167-187 (VISLIALCYLVFIVLYHFIIG). Residues 188–195 (DTVKGEIR) are Vacuolar-facing. The helical transmembrane segment at 196–216 (YFVPESGFGYLSVLPVFVFGF) threads the bilayer. Topologically, residues 217–240 (TCHQNAFSVINEVRNFSQGFVNFT) are cytoplasmic. Residues 241-261 (MFTAIISSTLLYLLVAITGYL) form a helical membrane-spanning segment. At 262-278 (SFGSLASGNIIAMYDNT) the chain is on the vacuolar side. Residues 279-299 (SIWIIGGKLAIVVLVLFSYPL) form a helical membrane-spanning segment. Residues 300–326 (QCHPCRNSVYQAIRRSYSAHDMSDGYH) lie on the Cytoplasmic side of the membrane. Residues 327–347 (AVITLCILLFTHSLALLLSSL) traverse the membrane as a helical segment. Over 348–349 (EM) the chain is Vacuolar. Residues 350 to 370 (VLAFVGSTGSTFISFILPGSL) form a helical membrane-spanning segment. Residues 371–394 (YYFFSHKVASPGNSSPLQLRISRA) lie on the Cytoplasmic side of the membrane. The helical transmembrane segment at 395-415 (FAAGLAIYGTVVMILCLNINI) threads the bilayer. Residues 416-420 (AKLSH) are Vacuolar-facing.

This sequence belongs to the amino acid/polyamine transporter 2 family.

It is found in the vacuole membrane. Functionally, vacuolar amino acid transporter involved in the vacuolar uptake of histidine, glutamate, tyrosine, arginine, lysine, and serine. Required for sporulation. In Schizosaccharomyces pombe (strain 972 / ATCC 24843) (Fission yeast), this protein is Vacuolar amino acid transporter 5 (avt5).